We begin with the raw amino-acid sequence, 192 residues long: Xanthine phosphoribosyltransferase (192 aa).

Residues leucine 20 and asparagine 27 each coordinate xanthine. 128-132 (ANGDA) contacts 5-phospho-alpha-D-ribose 1-diphosphate. Position 156 (lysine 156) interacts with xanthine.

It belongs to the purine/pyrimidine phosphoribosyltransferase family. Xpt subfamily. Homodimer.

The protein localises to the cytoplasm. It catalyses the reaction XMP + diphosphate = xanthine + 5-phospho-alpha-D-ribose 1-diphosphate. It functions in the pathway purine metabolism; XMP biosynthesis via salvage pathway; XMP from xanthine: step 1/1. In terms of biological role, converts the preformed base xanthine, a product of nucleic acid breakdown, to xanthosine 5'-monophosphate (XMP), so it can be reused for RNA or DNA synthesis. The polypeptide is Xanthine phosphoribosyltransferase (Staphylococcus aureus (strain bovine RF122 / ET3-1)).